A 550-amino-acid chain; its full sequence is Glucagon-like peptide 2 receptor (550 aa).

Residues 1-173 (MRPQPSPAVP…SFRQNVDHYA (173 aa)) are Extracellular-facing. 3 disulfide bridges follow: Cys-83–Cys-105, Cys-96–Cys-137, and Cys-118–Cys-159. 4 N-linked (GlcNAc...) asparagine glycosylation sites follow: Asn-97, Asn-113, Asn-148, and Asn-162. Residues 174–198 (LLYTLQLMYTVGYSVSLISLFLALT) form a helical membrane-spanning segment. At 199-210 (LFLFLRKLHCTR) the chain is on the cytoplasmic side. The helical transmembrane segment at 211-235 (NYIHMNLFASFILKVLAVLVKDMVS) threads the bilayer. Residues 236 to 261 (HNSYSKRPDDESGWMSYLSETSVSCR) are Extracellular-facing. The helical transmembrane segment at 262–285 (SVQVLLHYFVGTNHLWLLVEGLYL) threads the bilayer. The Cytoplasmic portion of the chain corresponds to 286-299 (HTLLEPTVFPERRL). A helical membrane pass occupies residues 300–321 (WPKYLVVGWAFPMLFVIPWGFA). Over 322 to 339 (RAHLENTRCWATNGNLKI) the chain is Extracellular. Residues 340–362 (WWIIRGPMLLCVTVNFFIFLKIL) traverse the membrane as a helical segment. The Cytoplasmic segment spans residues 363 to 386 (KLLISKLKAHQMCFRDYKYRLAKS). Residues 387–405 (TLLLIPLLGVHEVLFTFFP) form a helical membrane-spanning segment. At 406–417 (DDQVQGFSKRIR) the chain is on the extracellular side. A helical membrane pass occupies residues 418 to 438 (LFIQLTLSSVHGFLVALQYGF). Topologically, residues 439–550 (ANGEVKAELR…MEEILEESEI (112 aa)) are cytoplasmic.

It belongs to the G-protein coupled receptor 2 family.

The protein localises to the cell membrane. In terms of biological role, this is a receptor for glucagon-like peptide 2. The activity of this receptor is mediated by G proteins which activate adenylyl cyclase. The polypeptide is Glucagon-like peptide 2 receptor (Glp2r) (Rattus norvegicus (Rat)).